A 123-amino-acid chain; its full sequence is Small ribosomal subunit protein uS13 (123 aa).

The disordered stretch occupies residues Thr-103–Lys-123. The span at Thr-105–Lys-123 shows a compositional bias: basic residues.

Belongs to the universal ribosomal protein uS13 family. As to quaternary structure, part of the 30S ribosomal subunit. Forms a loose heterodimer with protein S19. Forms two bridges to the 50S subunit in the 70S ribosome.

Its function is as follows. Located at the top of the head of the 30S subunit, it contacts several helices of the 16S rRNA. In the 70S ribosome it contacts the 23S rRNA (bridge B1a) and protein L5 of the 50S subunit (bridge B1b), connecting the 2 subunits; these bridges are implicated in subunit movement. Contacts the tRNAs in the A and P-sites. The sequence is that of Small ribosomal subunit protein uS13 from Desulforudis audaxviator (strain MP104C).